The chain runs to 334 residues: DNA polymerase III subunit delta' (334 aa).

In terms of assembly, the DNA polymerase III holoenzyme complex contains at least 10 different subunits organized into 3 functionally essential subassemblies: the Pol III core, the beta sliding clamp processivity factor and the clamp-loading complex. The Pol III core (subunits alpha, epsilon and theta) contains the polymerase and the 3'-5' exonuclease proofreading activities. The polymerase is tethered to the template via the dimeric beta sliding clamp processivity factor. The clamp-loading complex (also called gamma complex) assembles the beta sliding clamp onto the primed template and plays a central role in the organization and communication at the replication fork. The clamp-loading complex contains delta, delta', psi and chi, and 3 copies of either or both of two different DnaX proteins, gamma and tau. The DNA replisome complex has a single clamp loader (3 tau and 1 each of delta, delta', psi and chi subunits) which binds 3 Pol III cores (1 core on the leading strand and 2 on the lagging strand) each with a beta sliding clamp dimer. Additional proteins in the replisome are other copies of gamma, psi and chi, Ssb, DNA helicase and RNA primase. The clamp loader hydrolyzes ATP to assemble the beta processivity factor onto the primed template and plays a central role in the organization and communication at the replication fork; the minimal complex to load the beta sliding clamp on DNA is delta, delta', gamma.

The enzyme catalyses DNA(n) + a 2'-deoxyribonucleoside 5'-triphosphate = DNA(n+1) + diphosphate. Functionally, part of the beta sliding clamp loading complex, which hydrolyzes ATP to load the beta clamp onto primed DNA to form the DNA replication pre-initiation complex. DNA polymerase III is a complex, multichain enzyme responsible for most of the replicative synthesis in bacteria. This DNA polymerase also exhibits 3' to 5' exonuclease activity. The gamma complex (gamma(3),delta,delta') is thought to load beta dimers onto DNA by binding ATP which alters the complex's conformation so it can bind beta sliding clamp dimers and open them at one interface. Primed DNA is recognized, ATP is hydrolyzed releasing the gamma complex and closing the beta sliding clamp ring around the primed DNA. In Escherichia coli (strain K12), this protein is DNA polymerase III subunit delta' (holB).